We begin with the raw amino-acid sequence, 76 residues long: Exodeoxyribonuclease 7 small subunit (76 aa).

It belongs to the XseB family. As to quaternary structure, heterooligomer composed of large and small subunits.

The protein localises to the cytoplasm. It carries out the reaction Exonucleolytic cleavage in either 5'- to 3'- or 3'- to 5'-direction to yield nucleoside 5'-phosphates.. In terms of biological role, bidirectionally degrades single-stranded DNA into large acid-insoluble oligonucleotides, which are then degraded further into small acid-soluble oligonucleotides. In Bacillus cytotoxicus (strain DSM 22905 / CIP 110041 / 391-98 / NVH 391-98), this protein is Exodeoxyribonuclease 7 small subunit.